We begin with the raw amino-acid sequence, 87 residues long: Toxin Cll4 (87 aa).

A signal peptide spans 1–19 (MNSLLMITACLALIGTVWA). The LCN-type CS-alpha/beta domain occupies 20-85 (KEGYIVNYHD…VWPLPKKRCN (66 aa)). Cystine bridges form between Cys-31-Cys-84, Cys-35-Cys-60, Cys-44-Cys-65, and Cys-48-Cys-67. Asn-85 is modified (asparagine amide).

The protein belongs to the long (4 C-C) scorpion toxin superfamily. Sodium channel inhibitor family. Beta subfamily. In terms of tissue distribution, expressed by the venom gland.

It localises to the secreted. Its function is as follows. Beta toxins bind voltage-independently at site-4 of sodium channels (Nav) and shift the voltage of activation toward more negative potentials thereby affecting sodium channel activation and promoting spontaneous and repetitive firing. This is Toxin Cll4 from Centruroides limpidus (Mexican scorpion).